A 462-amino-acid polypeptide reads, in one-letter code: ATP synthase subunit beta 1 (462 aa).

Residue 151-158 participates in ATP binding; the sequence is GGAGVGKT.

It belongs to the ATPase alpha/beta chains family. In terms of assembly, F-type ATPases have 2 components, CF(1) - the catalytic core - and CF(0) - the membrane proton channel. CF(1) has five subunits: alpha(3), beta(3), gamma(1), delta(1), epsilon(1). CF(0) has four main subunits: a(1), b(1), b'(1) and c(9-12).

It is found in the cell inner membrane. The catalysed reaction is ATP + H2O + 4 H(+)(in) = ADP + phosphate + 5 H(+)(out). In terms of biological role, produces ATP from ADP in the presence of a proton gradient across the membrane. The catalytic sites are hosted primarily by the beta subunits. In Chlorobium luteolum (strain DSM 273 / BCRC 81028 / 2530) (Pelodictyon luteolum), this protein is ATP synthase subunit beta 1.